The sequence spans 495 residues: Aspartyl/glutamyl-tRNA(Asn/Gln) amidotransferase subunit B (495 aa).

It belongs to the GatB/GatE family. GatB subfamily. In terms of assembly, heterotrimer of A, B and C subunits.

It catalyses the reaction L-glutamyl-tRNA(Gln) + L-glutamine + ATP + H2O = L-glutaminyl-tRNA(Gln) + L-glutamate + ADP + phosphate + H(+). It carries out the reaction L-aspartyl-tRNA(Asn) + L-glutamine + ATP + H2O = L-asparaginyl-tRNA(Asn) + L-glutamate + ADP + phosphate + 2 H(+). Its function is as follows. Allows the formation of correctly charged Asn-tRNA(Asn) or Gln-tRNA(Gln) through the transamidation of misacylated Asp-tRNA(Asn) or Glu-tRNA(Gln) in organisms which lack either or both of asparaginyl-tRNA or glutaminyl-tRNA synthetases. The reaction takes place in the presence of glutamine and ATP through an activated phospho-Asp-tRNA(Asn) or phospho-Glu-tRNA(Gln). This Acinetobacter baylyi (strain ATCC 33305 / BD413 / ADP1) protein is Aspartyl/glutamyl-tRNA(Asn/Gln) amidotransferase subunit B.